Here is a 130-residue protein sequence, read N- to C-terminus: Sigma-w pathway protein YsdB (130 aa).

A helical membrane pass occupies residues 2 to 22 (FVMVLRIILLALFAYCIYAVV).

The protein localises to the membrane. Its function is as follows. May mediate a negative feedback loop that down-regulates the expression of the sigma-W regulon following the activation of sigma-W in response to conditions of cell envelope stress. Might interact with and inhibit the activity of the protease PrsW, or could bind to the anti-sigma-W factor RsiW and thereby protect it from PrsW-mediated cleavage. The polypeptide is Sigma-w pathway protein YsdB (ysdB) (Bacillus subtilis (strain 168)).